We begin with the raw amino-acid sequence, 902 residues long: Cysteine-tryptophan domain-containing zinc finger protein 3 (902 aa).

The CW-type zinc finger occupies 21-74 (VLIEDNWVCCDMCHKWRLLPYGTNTSMLPKKWICSMLDWLPGMNKCDISEDETT). Positions 30, 33, 54, and 66 each coordinate Zn(2+). 4 disordered regions span residues 131–233 (EHDQ…EDRH), 326–345 (EDNR…NENL), 420–480 (QSST…LNAD), and 537–651 (HGPT…SASP). 2 stretches are compositionally biased toward basic and acidic residues: residues 151–169 (KNRE…DPVS) and 193–203 (SHSDGGDLTEK). The span at 204-213 (SKKHSKSKNR) shows a compositional bias: basic residues. Composition is skewed to basic and acidic residues over residues 214-233 (RGID…EDRH) and 335-345 (HTSKGGDNENL). Positions 421 to 433 (SSTVATSSSSKVS) are enriched in low complexity. 3 stretches are compositionally biased toward polar residues: residues 450-463 (ESVS…SNTD), 564-588 (NSAP…QIEM), and 599-611 (IDNQ…IGQD). The segment covering 612-625 (NHSHMKEGKSEVHT) has biased composition (basic and acidic residues). Polar residues predominate over residues 634-648 (KNHTQLRSNVENGDS).

In terms of tissue distribution, expressed in leaf sheaths, flag leaves, nodes, internodes and panicles.

The protein localises to the nucleus. Its function is as follows. Binds to histones H3K4me1, H3K4me2 and H3K4me3 in GST pull-down assay. May facilitate the recruitment of effectors to mediate gene expression. The protein is Cysteine-tryptophan domain-containing zinc finger protein 3 of Oryza sativa subsp. japonica (Rice).